Reading from the N-terminus, the 274-residue chain is MQHDGYWVFSQIDPVAFSLGPLSVRWYGLMYLFGFAFAMWLAGRRADAPNSGWTRNEVSDLLFYGFLGVILGGRVGYVLFYNFDMFLADPLYLFKIWTGGMSFHGGLIGVITAMVWFAHKTNRHFFTVADFVAPLIPFGLGVGRIGNFLNGELWGRVTDVPWAIIFPEAGPEPRHPSQLYQFALEGVVLFIILNLFWRKNPPRGAISGMFLLFYGLFRFLVEFVRQPDSQLGLYFQEISMGQILSTPMIIIGALMIWVAYKRPQLFGNSVKEAK.

7 helical membrane passes run 22 to 42 (LSVR…MWLA), 61 to 81 (LLFY…VLFY), 96 to 116 (IWTG…AMVW), 125 to 145 (FFTV…VGRI), 177 to 197 (SQLY…NLFW), 204 to 224 (GAIS…VEFV), and 238 to 258 (ISMG…MIWV). R144 lines the a 1,2-diacyl-sn-glycero-3-phospho-(1'-sn-glycerol) pocket.

This sequence belongs to the Lgt family.

The protein resides in the cell inner membrane. It carries out the reaction L-cysteinyl-[prolipoprotein] + a 1,2-diacyl-sn-glycero-3-phospho-(1'-sn-glycerol) = an S-1,2-diacyl-sn-glyceryl-L-cysteinyl-[prolipoprotein] + sn-glycerol 1-phosphate + H(+). It functions in the pathway protein modification; lipoprotein biosynthesis (diacylglyceryl transfer). Catalyzes the transfer of the diacylglyceryl group from phosphatidylglycerol to the sulfhydryl group of the N-terminal cysteine of a prolipoprotein, the first step in the formation of mature lipoproteins. This Aeromonas hydrophila subsp. hydrophila (strain ATCC 7966 / DSM 30187 / BCRC 13018 / CCUG 14551 / JCM 1027 / KCTC 2358 / NCIMB 9240 / NCTC 8049) protein is Phosphatidylglycerol--prolipoprotein diacylglyceryl transferase.